The following is a 233-amino-acid chain: tRNA (guanine-N(1)-)-methyltransferase (233 aa).

Residues glycine 121 and 140–145 (IGDYIL) each bind S-adenosyl-L-methionine.

The protein belongs to the RNA methyltransferase TrmD family. In terms of assembly, homodimer.

The protein localises to the cytoplasm. It catalyses the reaction guanosine(37) in tRNA + S-adenosyl-L-methionine = N(1)-methylguanosine(37) in tRNA + S-adenosyl-L-homocysteine + H(+). Functionally, specifically methylates guanosine-37 in various tRNAs. The protein is tRNA (guanine-N(1)-)-methyltransferase of Endomicrobium trichonymphae.